The following is a 152-amino-acid chain: Superoxide dismutase [Cu-Zn] 1 (152 aa).

Cu cation is bound by residues His-45, His-47, and His-62. A disulfide bridge links Cys-56 with Cys-145. Positions 62, 70, 79, and 82 each coordinate Zn(2+). His-119 is a binding site for Cu cation.

This sequence belongs to the Cu-Zn superoxide dismutase family. Homodimer. It depends on Cu cation as a cofactor. The cofactor is Zn(2+).

It localises to the cytoplasm. The enzyme catalyses 2 superoxide + 2 H(+) = H2O2 + O2. Destroys radicals which are normally produced within the cells and which are toxic to biological systems. This chain is Superoxide dismutase [Cu-Zn] 1 (SODCC.1), found in Solanum lycopersicum (Tomato).